A 200-amino-acid chain; its full sequence is 3-isopropylmalate dehydratase small subunit (200 aa).

This sequence belongs to the LeuD family. LeuD type 1 subfamily. In terms of assembly, heterodimer of LeuC and LeuD.

The enzyme catalyses (2R,3S)-3-isopropylmalate = (2S)-2-isopropylmalate. Its pathway is amino-acid biosynthesis; L-leucine biosynthesis; L-leucine from 3-methyl-2-oxobutanoate: step 2/4. Functionally, catalyzes the isomerization between 2-isopropylmalate and 3-isopropylmalate, via the formation of 2-isopropylmaleate. This Serratia proteamaculans (strain 568) protein is 3-isopropylmalate dehydratase small subunit.